Reading from the N-terminus, the 319-residue chain is Coproporphyrin III ferrochelatase 2 (319 aa).

Residues tyrosine 13, arginine 30, 46-47 (RY), serine 54, and tyrosine 125 each bind Fe-coproporphyrin III. Histidine 181 and glutamate 262 together coordinate Fe(2+).

It belongs to the ferrochelatase family.

It is found in the cytoplasm. It catalyses the reaction Fe-coproporphyrin III + 2 H(+) = coproporphyrin III + Fe(2+). The protein operates within porphyrin-containing compound metabolism; protoheme biosynthesis. Functionally, involved in coproporphyrin-dependent heme b biosynthesis. Catalyzes the insertion of ferrous iron into coproporphyrin III to form Fe-coproporphyrin III. The sequence is that of Coproporphyrin III ferrochelatase 2 from Bacillus anthracis.